We begin with the raw amino-acid sequence, 184 residues long: ATP synthase subunit b, chloroplastic (184 aa).

Residues 27-49 form a helical membrane-spanning segment; that stretch reads LATNPINLSVVFGVLIFFGKGVL.

This sequence belongs to the ATPase B chain family. F-type ATPases have 2 components, F(1) - the catalytic core - and F(0) - the membrane proton channel. F(1) has five subunits: alpha(3), beta(3), gamma(1), delta(1), epsilon(1). F(0) has four main subunits: a(1), b(1), b'(1) and c(10-14). The alpha and beta chains form an alternating ring which encloses part of the gamma chain. F(1) is attached to F(0) by a central stalk formed by the gamma and epsilon chains, while a peripheral stalk is formed by the delta, b and b' chains.

It is found in the plastid. It localises to the chloroplast thylakoid membrane. F(1)F(0) ATP synthase produces ATP from ADP in the presence of a proton or sodium gradient. F-type ATPases consist of two structural domains, F(1) containing the extramembraneous catalytic core and F(0) containing the membrane proton channel, linked together by a central stalk and a peripheral stalk. During catalysis, ATP synthesis in the catalytic domain of F(1) is coupled via a rotary mechanism of the central stalk subunits to proton translocation. Functionally, component of the F(0) channel, it forms part of the peripheral stalk, linking F(1) to F(0). The polypeptide is ATP synthase subunit b, chloroplastic (Barbarea verna (Land cress)).